Consider the following 184-residue polypeptide: Probable cobalt-precorrin-6B C(15)-methyltransferase (decarboxylating) (184 aa).

S-adenosyl-L-methionine-binding positions include T12, 36 to 40 (GCGTG), D59, and A87.

Belongs to the methyltransferase superfamily. Archaeal-type CbiT family.

The enzyme catalyses Co-precorrin-6B + S-adenosyl-L-methionine = Co-precorrin-7 + S-adenosyl-L-homocysteine + CO2. It participates in cofactor biosynthesis; adenosylcobalamin biosynthesis; cob(II)yrinate a,c-diamide from sirohydrochlorin (anaerobic route): step 8/10. Its function is as follows. Catalyzes the methylation of C-15 in cobalt-precorrin-6B followed by the decarboxylation of C-12 to form cobalt-precorrin-7. This chain is Probable cobalt-precorrin-6B C(15)-methyltransferase (decarboxylating), found in Methanosarcina mazei (strain ATCC BAA-159 / DSM 3647 / Goe1 / Go1 / JCM 11833 / OCM 88) (Methanosarcina frisia).